A 500-amino-acid chain; its full sequence is Cytochrome P450 71B26 (500 aa).

Residues 1-21 (MDSIWILSLLFFIIFLLLAAF) form a helical membrane-spanning segment. Cys440 contributes to the heme binding site.

It belongs to the cytochrome P450 family. Heme is required as a cofactor.

Its subcellular location is the membrane. The polypeptide is Cytochrome P450 71B26 (CYP71B26) (Arabidopsis thaliana (Mouse-ear cress)).